The sequence spans 325 residues: Chain length determinant protein (325 aa).

Over 1 to 31 (MRVENNNVSGQNLDPEQIDLIDLLVQLWRGK) the chain is Cytoplasmic. Residues 32–52 (MTIIISVIVAIVLAIGYLVVA) traverse the membrane as a helical segment. At 53 to 294 (KEKWTSTAIV…LPIRRDSPKK (242 aa)) the chain is on the periplasmic side. A helical membrane pass occupies residues 295 to 315 (AITLILAVLLGGMVGAGIVLG). Residues 316–325 (RNALRNYNAK) are Cytoplasmic-facing.

Belongs to the WzzB/Cld/Rol family.

It localises to the cell inner membrane. It participates in bacterial outer membrane biogenesis; lipopolysaccharide biosynthesis. Confers a modal distribution of chain length on the O-antigen component of lipopolysaccharide (LPS). Gives rise to a reduced number of short chain molecules and increases in numbers of longer molecules, with a modal value of 13 (in strain O111/M92) and of 17 (in strain K12). The sequence is that of Chain length determinant protein (wzzB) from Escherichia coli.